The following is a 412-amino-acid chain: BSD domain-containing protein 1 (412 aa).

The region spanning 145 to 197 (WLSTFSLEERKAEISELLVSSPAIRALYTKMVPAAVAHAEFWQRYFYKVFQLE) is the BSD domain. Basic and acidic residues predominate over residues 208–217 (QRAEQTDHSE). Disordered stretches follow at residues 208-227 (QRAEQTDHSESLGWEEEDEE), 253-272 (VTVADTPESSSPPQAVASLS), and 298-412 (ESVT…ENWE). Composition is skewed to polar residues over residues 259–272 (PESSSPPQAVASLS) and 298–308 (ESVTIRVTQPS). Position 308 is a phosphoserine (serine 308). A compositionally biased stretch (basic and acidic residues) spans 328 to 349 (PEERPAPREETAREDMAQDLRV). A compositionally biased stretch (polar residues) spans 353–372 (NSDSGKSTPSNNGKKGSSTD). Acidic residues-rich tracts occupy residues 373–390 (VSEDWEKDFDLDMTEEEV) and 400–412 (TEELEDEDWENWE).

This chain is BSD domain-containing protein 1 (bsdc1), found in Danio rerio (Zebrafish).